Here is a 1151-residue protein sequence, read N- to C-terminus: Syntaxin-binding protein 5 (1151 aa).

Positions 14 to 34 are disordered; it reads TAGSSSASQQQQQQHPPGNRE. Over residues 17-27 the composition is skewed to low complexity; it reads SSSASQQQQQQ. 10 WD repeats span residues 61–94, 101–140, 145–181, 200–234, 240–272, 294–336, 344–378, 400–477, 505–619, and 633–695; these read SALA…CYCQ, VIQL…SLKF, VTFC…GYVI, HISD…DYRY, IHSV…PAKP, PILK…KSTA, IVDF…LIDL, TCCE…YKLK, QIIS…ELVI, and TSLA…SGAG. Disordered regions lie at residues 555-595 and 674-729; these read ETPE…GLRD and SNDP…EQKM. Ser-692 is modified (phosphoserine). Residues 712–721 are compositionally biased toward low complexity; that stretch reads SPTSGSSSPH. Ser-723 is modified (phosphoserine; by PKA). Position 759 is a phosphoserine (Ser-759). Thr-762 carries the post-translational modification Phosphothreonine. A Phosphoserine modification is found at Ser-782. Residue Thr-784 is modified to Phosphothreonine. Ser-785 carries the post-translational modification Phosphoserine. WD repeat units follow at residues 794-851, 860-934, 939-983, and 997-1020; these read ISAL…SGTI, RMAF…QNCA, ITET…LDVY, and CFTN…TYSQ. Basic and acidic residues predominate over residues 881 to 892; that stretch reads HNVPEEKDEKEK. Residues 881 to 906 form a disordered region; it reads HNVPEEKDEKEKLKKRRPVSVSPSSS. Phosphoserine occurs at positions 900 and 902. Residue Thr-1039 is modified to Phosphothreonine. Residues Ser-1058 and Ser-1131 each carry the phosphoserine modification. The v-SNARE coiled-coil homology domain maps to 1086–1146; sequence GIEGVKGAAS…HEIMLKYKDK (61 aa).

Belongs to the WD repeat L(2)GL family. Interacts with STX1A and STX1B via its v-SNARE homology domain. Part of a complex that contains STX1, STXBP5, SNAP25 and SYT1. Part of a complex that contains STXBP5, STX4A and SNAP23.

The protein resides in the cytoplasm. The protein localises to the cell membrane. It is found in the cytoplasmic vesicle membrane. It localises to the cytoplasmic vesicle. Its subcellular location is the secretory vesicle. The protein resides in the synaptic vesicle. The protein localises to the synapse. Plays a regulatory role in calcium-dependent exocytosis and neurotransmitter release. Inhibits membrane fusion between transport vesicles and the plasma membrane. May modulate the assembly of trans-SNARE complexes between transport vesicles and the plasma membrane. Inhibits translocation of GLUT4 from intracellular vesicles to the plasma membrane. Competes with STXBP1 for STX1 binding. This chain is Syntaxin-binding protein 5 (STXBP5), found in Homo sapiens (Human).